The sequence spans 280 residues: Release factor glutamine methyltransferase (280 aa).

Residues 120–124 (GTGSG), Asp143, and Asn186 each bind S-adenosyl-L-methionine. 186-189 (NPPY) provides a ligand contact to substrate.

The protein belongs to the protein N5-glutamine methyltransferase family. PrmC subfamily.

It catalyses the reaction L-glutaminyl-[peptide chain release factor] + S-adenosyl-L-methionine = N(5)-methyl-L-glutaminyl-[peptide chain release factor] + S-adenosyl-L-homocysteine + H(+). In terms of biological role, methylates the class 1 translation termination release factors RF1/PrfA and RF2/PrfB on the glutamine residue of the universally conserved GGQ motif. This Koribacter versatilis (strain Ellin345) protein is Release factor glutamine methyltransferase.